A 280-amino-acid chain; its full sequence is Shikimate dehydrogenase (NADP(+)) (280 aa).

Shikimate-binding positions include 20–22 (SLS) and Thr67. Residue Lys71 is the Proton acceptor of the active site. Glu83 contacts NADP(+). 2 residues coordinate shikimate: Asn92 and Asp107. NADP(+)-binding positions include 131 to 135 (GAGGA), 155 to 160 (NRTLNK), and Leu224. Tyr226 lines the shikimate pocket. Position 247 (Gly247) interacts with NADP(+).

It belongs to the shikimate dehydrogenase family. In terms of assembly, homodimer.

It catalyses the reaction shikimate + NADP(+) = 3-dehydroshikimate + NADPH + H(+). Its pathway is metabolic intermediate biosynthesis; chorismate biosynthesis; chorismate from D-erythrose 4-phosphate and phosphoenolpyruvate: step 4/7. Its function is as follows. Involved in the biosynthesis of the chorismate, which leads to the biosynthesis of aromatic amino acids. Catalyzes the reversible NADPH linked reduction of 3-dehydroshikimate (DHSA) to yield shikimate (SA). This is Shikimate dehydrogenase (NADP(+)) from Caldanaerobacter subterraneus subsp. tengcongensis (strain DSM 15242 / JCM 11007 / NBRC 100824 / MB4) (Thermoanaerobacter tengcongensis).